Reading from the N-terminus, the 201-residue chain is uncharacterized protein (201 aa).

The signal sequence occupies residues 1–23 (MKILYFIFVIIINILLILNHVKS). Residues 24–178 (KYNTFIFENT…GNYGEDPQRN (155 aa)) are Extracellular-facing. N-linked (GlcNAc...) asparagine glycans are attached at residues asparagine 114 and asparagine 134. The segment at 122–157 (TPETPSPTENAPNTSGGSSEGNHYTYKSSSSSSEHI) is disordered. Over residues 123–148 (PETPSPTENAPNTSGGSSEGNHYTYK) the composition is skewed to polar residues. The chain crosses the membrane as a helical span at residues 179 to 199 (IGISLSSSLIFISILFLIIFI). Residues 200-201 (NN) lie on the Cytoplasmic side of the membrane.

Its subcellular location is the membrane. This is an uncharacterized protein from Dictyostelium discoideum (Social amoeba).